The sequence spans 257 residues: UPF0246 protein BT_3869 (257 aa).

The protein belongs to the UPF0246 family.

This Bacteroides thetaiotaomicron (strain ATCC 29148 / DSM 2079 / JCM 5827 / CCUG 10774 / NCTC 10582 / VPI-5482 / E50) protein is UPF0246 protein BT_3869.